The following is an 898-amino-acid chain: Serine/threonine-protein kinase TAO3 (898 aa).

One can recognise a Protein kinase domain in the interval 24 to 277 (FIDLHEIGHG…AVELLRHDFI (254 aa)). ATP-binding positions include 30–38 (IGHGSFGAV) and Lys-53. The active-site Proton acceptor is the Asp-147. 2 disordered regions span residues 316 to 375 (TRNG…DESS) and 405 to 424 (DEAG…SVQS). Residue Ser-324 is modified to Phosphoserine; by ATM. Ser-343, Ser-346, and Ser-349 each carry phosphoserine. The segment covering 349-366 (SIPSTSVSTGSRSSSVNS) has biased composition (low complexity). Phosphothreonine is present on Thr-357. Phosphoserine is present on Ser-359. Over residues 405–416 (DEAGHGDPRPEP) the composition is skewed to basic and acidic residues. Ser-442 is subject to Phosphoserine. Coiled coils occupy residues 452 to 502 (EQEN…THAN), 548 to 649 (FLES…HAML), and 754 to 871 (LKTL…QERE). Residues 565–596 (EEMNEDHSTPKKEKQERISKHKENLQHTQAEE) are disordered. An N6-acetyllysine modification is found at Lys-830.

It belongs to the protein kinase superfamily. STE Ser/Thr protein kinase family. STE20 subfamily. As to quaternary structure, self-associates. Interacts with ERN1 and TRAF2. Interaction with TRAF2 is facilitated under ER stress conditions, such as treatment with tunicamycin, and may promote TRAF2 phosphorylation. Interacts (via N-terminus) with STK25; the interaction promotes STK25 abundance at the level of protein expression and/or stability. Autophosphorylated. Phosphorylation at Ser-324 by ATM following DNA damage is required for activation of the p38/MAPK14 stress-activated MAPK cascade. Phosphorylated at Ser-324 and on Tyr residues during T cell activation. Phosphorylated by LRRK2.

The protein resides in the cytoplasm. It is found in the cell membrane. It localises to the membrane raft. The protein localises to the lipid droplet. It carries out the reaction L-seryl-[protein] + ATP = O-phospho-L-seryl-[protein] + ADP + H(+). It catalyses the reaction L-threonyl-[protein] + ATP = O-phospho-L-threonyl-[protein] + ADP + H(+). Functionally, serine/threonine-protein kinase that acts as a regulator of the p38/MAPK14 stress-activated MAPK cascade and of the MAPK8/JNK cascade. In response to DNA damage, involved in the G2/M transition DNA damage checkpoint by activating the p38/MAPK14 stress-activated MAPK cascade, probably by mediating phosphorylation of upstream MAP2K3 and MAP2K6 kinases. Inhibits basal activity of the MAPK8/JNK cascade and diminishes its activation in response to epidermal growth factor (EGF). Positively regulates canonical T cell receptor (TCR) signaling by preventing early PTPN6/SHP1-mediated inactivation of LCK, ensuring sustained TCR signaling that is required for optimal activation and differentiation of T cells. Phosphorylates PTPN6/SHP1 on 'Thr-394', leading to its polyubiquitination and subsequent proteasomal degradation. Required for cell surface expression of metalloprotease ADAM10 on type 1 transitional B cells which is necessary for their NOTCH-mediated development into marginal zone B cells. Also required for the NOTCH-mediated terminal differentiation of splenic conventional type 2 dendritic cells. Positively regulates osteoblast differentiation by acting as an upstream activator of the JNK pathway. Promotes JNK signaling in hepatocytes and positively regulates hepatocyte lipid storage by inhibiting beta-oxidation and triacylglycerol secretion while enhancing lipid synthesis. Restricts age-associated inflammation by negatively regulating differentiation of macrophages and their production of pro-inflammatory cytokines. Plays a role in negatively regulating the abundance of regulatory T cells in white adipose tissue. This chain is Serine/threonine-protein kinase TAO3 (Taok3), found in Mus musculus (Mouse).